The following is a 660-amino-acid chain: Protein NEDD1 (660 aa).

WD repeat units lie at residues 1-31, 32-71, 75-114, 117-156, 160-200, 204-244, 246-285, and 289-332; these read MQEN…FNPH, TSPH…PVPL, AEGQ…VHRS, DHKD…SSTP, GSNQ…PYHN, VHKA…LVKT, VADT…SPVK, and AHKT…NAAS. Ser-325 bears the Phosphoserine mark. The interval 369-411 is disordered; sequence QEKAGLPRSINTDTLSKETDSGKNQDFSSFDDTGKSSLGDMFS. The residue at position 382 (Thr-382) is a Phosphothreonine; by PLK1. The residue at position 397 (Ser-397) is a Phosphoserine; by PLK1. Ser-411 carries the phosphoserine modification. Phosphoserine; by PLK1 is present on Ser-426. Ser-468 and Ser-516 each carry phosphoserine. Over residues 507 to 523 the composition is skewed to polar residues; sequence GAESGNLNTSPSSNQTR. The interval 507 to 532 is disordered; sequence GAESGNLNTSPSSNQTRNSEKFEKPE. Thr-550 is modified (phosphothreonine; by CDK1). A Phosphoserine; by PLK1 modification is found at Ser-637.

Interacts with FAM29A. Interacts with HSPA1A and HSPA1B. Interacts with gamma-tubulin in a HSPA1A/B-dependent manner. In terms of processing, during mitosis, prior phosphorylation on Thr-550 by CDK1 promotes subsequent phosphorylation by PLK1 on Thr-382, Ser-397, Ser-426 and Ser-637. Phosphorylated NEDD1 can interact with gamma-tubulin for targeting the gamma-tubulin ring complex (gTuRC) to the centrosome, an important step for spindle formation.

Its subcellular location is the cytoplasm. It localises to the cytoskeleton. It is found in the microtubule organizing center. The protein resides in the centrosome. Functionally, required for mitosis progression. Promotes the nucleation of microtubules from the spindle. The sequence is that of Protein NEDD1 (NEDD1) from Homo sapiens (Human).